Reading from the N-terminus, the 345-residue chain is 4-hydroxy-3-methylbut-2-en-1-yl diphosphate synthase (flavodoxin) (345 aa).

Cys-271, Cys-274, Cys-306, and Glu-313 together coordinate [4Fe-4S] cluster.

This sequence belongs to the IspG family. [4Fe-4S] cluster is required as a cofactor.

It carries out the reaction (2E)-4-hydroxy-3-methylbut-2-enyl diphosphate + oxidized [flavodoxin] + H2O + 2 H(+) = 2-C-methyl-D-erythritol 2,4-cyclic diphosphate + reduced [flavodoxin]. It participates in isoprenoid biosynthesis; isopentenyl diphosphate biosynthesis via DXP pathway; isopentenyl diphosphate from 1-deoxy-D-xylulose 5-phosphate: step 5/6. Functionally, converts 2C-methyl-D-erythritol 2,4-cyclodiphosphate (ME-2,4cPP) into 1-hydroxy-2-methyl-2-(E)-butenyl 4-diphosphate. The chain is 4-hydroxy-3-methylbut-2-en-1-yl diphosphate synthase (flavodoxin) from Haemophilus influenzae (strain PittEE).